A 423-amino-acid chain; its full sequence is D-tagatose-1,6-bisphosphate aldolase subunit GatZ (423 aa).

It belongs to the GatZ/KbaZ family. GatZ subfamily. Forms a complex with GatY.

It functions in the pathway carbohydrate metabolism; D-tagatose 6-phosphate degradation; D-glyceraldehyde 3-phosphate and glycerone phosphate from D-tagatose 6-phosphate: step 2/2. Its function is as follows. Component of the tagatose-1,6-bisphosphate aldolase GatYZ that is required for full activity and stability of the Y subunit. Could have a chaperone-like function for the proper and stable folding of GatY. When expressed alone, GatZ does not show any aldolase activity. Is involved in the catabolism of galactitol. The sequence is that of D-tagatose-1,6-bisphosphate aldolase subunit GatZ from Salmonella enteritidis PT4 (strain P125109).